A 574-amino-acid polypeptide reads, in one-letter code: Putative thiamine pyrophosphate-containing protein YdaP (574 aa).

A coiled-coil region spans residues 28–55 (DSINEFIEELRHERNQLKFIQTRHEEVA). Glutamate 52 contributes to the thiamine diphosphate binding site. Residues 256-277 (IGTK…LGTS) and 294-313 (DSDP…LVCD) contribute to the FAD site. The segment at 384–464 (TVTVWMARHF…ITVVILNNEN (81 aa)) is thiamine pyrophosphate binding. The Mg(2+) site is built by aspartate 435 and asparagine 462.

It belongs to the TPP enzyme family. It depends on Mg(2+) as a cofactor. Thiamine diphosphate serves as cofactor.

The sequence is that of Putative thiamine pyrophosphate-containing protein YdaP (ydaP) from Bacillus subtilis (strain 168).